We begin with the raw amino-acid sequence, 421 residues long: Lipid II:glycine glycyltransferase (421 aa).

This sequence belongs to the FemABX family. Monomer.

It localises to the cytoplasm. It carries out the reaction beta-D-GlcNAc-(1-&gt;4)-Mur2Ac(oyl-L-Ala-D-isoglutaminyl-L-Lys-D-Ala-D-Ala)-di-trans,octa-cis-undecaprenyl diphosphate + glycyl-tRNA(Gly) = beta-D-GlcNAc-(1-&gt;4)-Mur2Ac(oyl-L-Ala-D-isoglutaminyl-L-Lys-(N(6)-Gly)-D-Ala-D-Ala)-di-trans,octa-cis-undecaprenyl diphosphate + tRNA(Gly) + H(+). Its function is as follows. Catalyzes the incorporation of the first glycine of the pentaglycine interpeptide bridge, which is characteristic of the S.aureus peptidoglycan. This glycine is added to the epsilon-amino group of the L-lysine of the membrane-bound lipid II intermediate (GlcNAc-(beta-1,4)-N-acetylmuramic acid(-L-Ala-D-iGln-L-Lys-D-Ala-D-Ala)-pyrophosphoryl-undecaprenol), using glycyl-tRNA(Gly) as donor, in a ribosome-independent mechanism. This Staphylococcus aureus (strain bovine RF122 / ET3-1) protein is Lipid II:glycine glycyltransferase (femX).